Consider the following 56-residue polypeptide: MAVQQNKKSRSKRGMRRSHDALSTAQLSVDATSGELHLRHNVTADGYYRGKKVINK.

The tract at residues 1–26 is disordered; it reads MAVQQNKKSRSKRGMRRSHDALSTAQ. Residues 7-16 show a composition bias toward basic residues; the sequence is KKSRSKRGMR.

The protein belongs to the bacterial ribosomal protein bL32 family.

This is Large ribosomal subunit protein bL32 from Shewanella amazonensis (strain ATCC BAA-1098 / SB2B).